We begin with the raw amino-acid sequence, 338 residues long: Methionine import ATP-binding protein MetN 1 (338 aa).

The 240-residue stretch at 2 to 241 (IQLENIEKHY…PNEKLTKDFI (240 aa)) folds into the ABC transporter domain. 38–45 (GYSGAGKS) is an ATP binding site.

This sequence belongs to the ABC transporter superfamily. Methionine importer (TC 3.A.1.24) family. As to quaternary structure, the complex is composed of two ATP-binding proteins (MetN), two transmembrane proteins (MetI) and a solute-binding protein (MetQ).

It is found in the cell membrane. It catalyses the reaction L-methionine(out) + ATP + H2O = L-methionine(in) + ADP + phosphate + H(+). It carries out the reaction D-methionine(out) + ATP + H2O = D-methionine(in) + ADP + phosphate + H(+). Its function is as follows. Part of the ABC transporter complex MetNIQ involved in methionine import. Responsible for energy coupling to the transport system. This is Methionine import ATP-binding protein MetN 1 from Oceanobacillus iheyensis (strain DSM 14371 / CIP 107618 / JCM 11309 / KCTC 3954 / HTE831).